The primary structure comprises 477 residues: Sulfate adenylyltransferase subunit 1 (477 aa).

Residues K22–L239 enclose the tr-type G domain. Residues G31 to S38 are G1. Residue G31–S38 participates in GTP binding. The tract at residues G89–D93 is G2. Positions D110–G113 are G3. Residues D110–H114 and N165–D168 contribute to the GTP site. Positions N165–D168 are G4. The G5 stretch occupies residues S202–L204.

The protein belongs to the TRAFAC class translation factor GTPase superfamily. Classic translation factor GTPase family. CysN/NodQ subfamily. In terms of assembly, heterodimer composed of CysD, the smaller subunit, and CysN.

It carries out the reaction sulfate + ATP + H(+) = adenosine 5'-phosphosulfate + diphosphate. The protein operates within sulfur metabolism; hydrogen sulfide biosynthesis; sulfite from sulfate: step 1/3. With CysD forms the ATP sulfurylase (ATPS) that catalyzes the adenylation of sulfate producing adenosine 5'-phosphosulfate (APS) and diphosphate, the first enzymatic step in sulfur assimilation pathway. APS synthesis involves the formation of a high-energy phosphoric-sulfuric acid anhydride bond driven by GTP hydrolysis by CysN coupled to ATP hydrolysis by CysD. The polypeptide is Sulfate adenylyltransferase subunit 1 (Chromobacterium violaceum (strain ATCC 12472 / DSM 30191 / JCM 1249 / CCUG 213 / NBRC 12614 / NCIMB 9131 / NCTC 9757 / MK)).